Reading from the N-terminus, the 548-residue chain is Dihydroxy-acid dehydratase (548 aa).

Asp78 is a binding site for Mg(2+). Residue Cys119 coordinates [2Fe-2S] cluster. Residues Asp120 and Lys121 each contribute to the Mg(2+) site. Position 121 is an N6-carboxylysine (Lys121). Cys185 is a [2Fe-2S] cluster binding site. Glu438 lines the Mg(2+) pocket. Residue Ser464 is the Proton acceptor of the active site.

Belongs to the IlvD/Edd family. As to quaternary structure, homodimer. The cofactor is [2Fe-2S] cluster. Mg(2+) serves as cofactor.

It catalyses the reaction (2R)-2,3-dihydroxy-3-methylbutanoate = 3-methyl-2-oxobutanoate + H2O. The enzyme catalyses (2R,3R)-2,3-dihydroxy-3-methylpentanoate = (S)-3-methyl-2-oxopentanoate + H2O. It functions in the pathway amino-acid biosynthesis; L-isoleucine biosynthesis; L-isoleucine from 2-oxobutanoate: step 3/4. Its pathway is amino-acid biosynthesis; L-valine biosynthesis; L-valine from pyruvate: step 3/4. Its function is as follows. Functions in the biosynthesis of branched-chain amino acids. Catalyzes the dehydration of (2R,3R)-2,3-dihydroxy-3-methylpentanoate (2,3-dihydroxy-3-methylvalerate) into 2-oxo-3-methylpentanoate (2-oxo-3-methylvalerate) and of (2R)-2,3-dihydroxy-3-methylbutanoate (2,3-dihydroxyisovalerate) into 2-oxo-3-methylbutanoate (2-oxoisovalerate), the penultimate precursor to L-isoleucine and L-valine, respectively. This chain is Dihydroxy-acid dehydratase, found in Methanothrix thermoacetophila (strain DSM 6194 / JCM 14653 / NBRC 101360 / PT) (Methanosaeta thermophila).